The chain runs to 279 residues: Large ribosomal subunit protein uL5c (279 aa).

Disordered stretches follow at residues 1–23 and 40–63; these read MAATAVTLPSSPAPFPVTTTASS and LRVAASAAADAPPKPAPPPTSPSG. A chloroplast-targeting transit peptide spans 1–43; the sequence is MAATAVTLPSSPAPFPVTTTASSSRNVRLLLRSPPPRRALRVA. Positions 41–50 are enriched in low complexity; the sequence is RVAASAAADA. A compositionally biased stretch (pro residues) spans 51–60; the sequence is PPKPAPPPTS.

The protein belongs to the universal ribosomal protein uL5 family. Part of the 50S ribosomal subunit; contacts the 5S rRNA.

Its subcellular location is the plastid. It localises to the chloroplast. Binds 5S rRNA, forms part of the central protuberance of the 50S subunit. The sequence is that of Large ribosomal subunit protein uL5c (RPL5) from Oryza sativa subsp. japonica (Rice).